A 75-amino-acid polypeptide reads, in one-letter code: U6-lycotoxin-Ls1a (75 aa).

An N-terminal signal peptide occupies residues 1 to 21 (MKLLLFTALVLVVISLIEVEA). The propeptide occupies 22-25 (ENER).

Belongs to the neurotoxin 19 (CSTX) family. 06 (U6-Lctx) subfamily. Post-translationally, contains 4 disulfide bonds. In terms of tissue distribution, expressed by the venom gland.

Its subcellular location is the secreted. The chain is U6-lycotoxin-Ls1a from Lycosa singoriensis (Wolf spider).